The chain runs to 316 residues: Phosphatidylinositol mannoside acyltransferase (316 aa).

His-137 (proton acceptor) is an active-site residue. His-137 and Arg-175 together coordinate hexadecanoyl-CoA. Glu-211 is an active-site residue. Glu-240 provides a ligand contact to hexadecanoyl-CoA.

The protein belongs to the LpxL/LpxM/LpxP family.

Its subcellular location is the cell inner membrane. The enzyme catalyses a 2,6-O-bis(alpha-D-mannopyranosyl)-1-phosphatidyl-1D-myo-inositol + an acyl-CoA = a 2-O-(alpha-D-mannosyl)-6-O-(6-O-acyl-alpha-D-mannosyl)-1-phosphatidyl-1D-myo-inositol + CoA. The catalysed reaction is a 1,2-diacyl-sn-glycero-3-phospho-[alpha-D-mannopyranosyl-(1&lt;-&gt;6)-D-myo-inositol] + an acyl-CoA = a 1,2-diacyl-sn-glycero-3-phospho-[alpha-D-6-acyl-mannopyranosyl-(1&lt;-&gt;6)-D-myo-inositol] + CoA. It functions in the pathway phospholipid metabolism; phosphatidylinositol metabolism. Its function is as follows. Catalyzes the transfer of a palmitoyl moiety from palmitoyl-CoA to the 6-position of the mannose ring linked to the 2-position of myo-inositol in phosphatidyl-myo-inositol monomannoside (PIM1) or dimannoside (PIM2). Essential for growth and survival in axenic cultures and during macrophage infection and in a mouse model of infection. This Mycobacterium tuberculosis (strain ATCC 25618 / H37Rv) protein is Phosphatidylinositol mannoside acyltransferase.